We begin with the raw amino-acid sequence, 203 residues long: Urease accessory protein UreG (203 aa).

GTP is bound at residue 11–18 (GPVGSGKT).

Belongs to the SIMIBI class G3E GTPase family. UreG subfamily. Homodimer. UreD, UreF and UreG form a complex that acts as a GTP-hydrolysis-dependent molecular chaperone, activating the urease apoprotein by helping to assemble the nickel containing metallocenter of UreC. The UreE protein probably delivers the nickel.

The protein localises to the cytoplasm. Its function is as follows. Facilitates the functional incorporation of the urease nickel metallocenter. This process requires GTP hydrolysis, probably effectuated by UreG. This is Urease accessory protein UreG from Prochlorococcus marinus (strain MIT 9301).